The primary structure comprises 154 residues: Prefoldin subunit 2 (154 aa).

Disordered regions lie at residues 1–20 (MADS…GKGA) and 126–154 (LMGE…VLVS). The span at 9–18 (GKSGGSGAGK) shows a compositional bias: gly residues. The span at 126–139 (LMGEDEKPAAKENS) shows a compositional bias: basic and acidic residues. Residues 140 to 154 (EGAGAKASSAGVLVS) are compositionally biased toward low complexity.

It belongs to the prefoldin subunit beta family. In terms of assembly, heterohexamer of two PFD-alpha type and four PFD-beta type subunits. Component of the PAQosome complex which is responsible for the biogenesis of several protein complexes and which consists of R2TP complex members RUVBL1, RUVBL2, RPAP3 and PIH1D1, URI complex members PFDN2, PFDN6, PDRG1, UXT and URI1 as well as ASDURF, POLR2E and DNAAF10/WDR92. Interacts with URI1; the interaction is phosphorylation-dependent and occurs in a growth-dependent manner.

It localises to the nucleus. Its subcellular location is the cytoplasm. The protein resides in the mitochondrion. Functionally, binds specifically to cytosolic chaperonin (c-CPN) and transfers target proteins to it. Binds to nascent polypeptide chain and promotes folding in an environment in which there are many competing pathways for nonnative proteins. This Mus musculus (Mouse) protein is Prefoldin subunit 2 (Pfdn2).